Reading from the N-terminus, the 105-residue chain is Small ribosomal subunit protein uS10 (105 aa).

It belongs to the universal ribosomal protein uS10 family. Part of the 30S ribosomal subunit.

In terms of biological role, involved in the binding of tRNA to the ribosomes. The chain is Small ribosomal subunit protein uS10 from Rickettsia canadensis (strain McKiel).